Here is a 37-residue protein sequence, read N- to C-terminus: Cortex morphogenetic protein A (37 aa).

In terms of assembly, can form a complex with SpoIVA and ClpX.

It is found in the forespore. Its function is as follows. Ensures proper spore envelope assembly. Represses premature cortex assembly until coat assembly successfully initiates. Also participates in a quality-control pathway that selectively removes defective sporulating cells through regulated cell death. Acts as an adaptator that delivers SpoIVA to the ClpXP proteolytic machinery for degradation, specifically in cells that improperly assemble the spore envelope. In Bacillus subtilis (strain 168), this protein is Cortex morphogenetic protein A.